A 71-amino-acid chain; its full sequence is uncharacterized protein (71 aa).

The Cytoplasmic segment spans residues 1 to 16 (MLLLYTVMILTCIIYK). A helical membrane pass occupies residues 17–38 (LVPDNKYWPIHMFFFIMIYIVY). The Extracellular segment spans residues 39 to 69 (MYEKLDIHEKSQFWNYTMARLSGHPVPTIIC). Asn-53 is a glycosylation site (N-linked (GlcNAc...) asparagine; by host).

Belongs to the asfivirus X69R family.

It is found in the host membrane. This is an uncharacterized protein from African swine fever virus (isolate Pig/Kenya/KEN-50/1950) (ASFV).